The sequence spans 1122 residues: Maestro heat-like repeat-containing protein family member 7 (1122 aa).

Disordered regions lie at residues 1–144 (MALS…LSED) and 183–203 (SHTI…NTSL). The segment covering 33 to 65 (TTPRPTPDLTLAPLPAHGVALAPALHPALSPDP) has biased composition (low complexity). 3 stretches are compositionally biased toward polar residues: residues 75–95 (DISN…INTA), 120–136 (PVPS…SPEN), and 184–203 (HTIS…NTSL). N-linked (GlcNAc...) asparagine glycans are attached at residues Asn-200, Asn-210, Asn-255, Asn-267, and Asn-296. The disordered stretch occupies residues 246–265 (WNTGSKGSVNVTSNSQPRSG). Phosphoserine is present on Ser-356. The disordered stretch occupies residues 363–385 (FRSPPEGTSEDAKANESEKRDHD). Residues 372–385 (EDAKANESEKRDHD) show a composition bias toward basic and acidic residues. N-linked (GlcNAc...) asparagine glycosylation is found at Asn-541 and Asn-546. A run of 2 helical transmembrane segments spans residues 548–568 (TLVT…LLLG) and 722–742 (LLPI…ALLM). 4 HEAT repeats span residues 913–950 (QELC…MEQV), 992–1029 (TKVQ…GQAK), 1035–1072 (SVYI…KLRM), and 1080–1117 (EQLT…FFLL).

The protein resides in the membrane. In Rattus norvegicus (Rat), this protein is Maestro heat-like repeat-containing protein family member 7 (Mroh7).